Reading from the N-terminus, the 107-residue chain is Large ribosomal subunit protein uL24 (107 aa).

The protein belongs to the universal ribosomal protein uL24 family. Part of the 50S ribosomal subunit.

Functionally, one of two assembly initiator proteins, it binds directly to the 5'-end of the 23S rRNA, where it nucleates assembly of the 50S subunit. In terms of biological role, one of the proteins that surrounds the polypeptide exit tunnel on the outside of the subunit. This Mesomycoplasma hyopneumoniae (strain 7448) (Mycoplasma hyopneumoniae) protein is Large ribosomal subunit protein uL24.